The chain runs to 143 residues: Pre-mRNA-splicing factor U5-Cwc21 (143 aa).

The CWF21 domain occupies 27-70 (EHHRSLRAIKLKVLLYREEREAAGVPPDVISRECATLHGSLLRN).

Belongs to the CWC21 family. As to quaternary structure, associates with the NTC complex (or PRP19-associated complex). The NTC complex associates with the spliceosome after the release of the U1 and U4 snRNAs and forms the CWC spliceosome subcomplex reminiscent of a late-stage spliceosome. Associates specifically with U5-containing snRNPs.

The protein localises to the cytoplasm. It is found in the nucleus. Its function is as follows. Essential protein involved in pre-mRNA cis- and trans-splicing. May function at or prior to the first catalytic step of splicing at the catalytic center of the spliceosome. May do so by stabilizing the catalytic center or the position of the RNA substrate. The chain is Pre-mRNA-splicing factor U5-Cwc21 from Trypanosoma brucei brucei (strain 927/4 GUTat10.1).